Reading from the N-terminus, the 257-residue chain is 3-dehydroquinate dehydratase (257 aa).

Residues 50–52 (EWR) and R86 each bind 3-dehydroquinate. H147 (proton donor/acceptor) is an active-site residue. Residue K174 is the Schiff-base intermediate with substrate of the active site. Residues R216, S235, and Q239 each coordinate 3-dehydroquinate.

It belongs to the type-I 3-dehydroquinase family. As to quaternary structure, homodimer.

It catalyses the reaction 3-dehydroquinate = 3-dehydroshikimate + H2O. It participates in metabolic intermediate biosynthesis; chorismate biosynthesis; chorismate from D-erythrose 4-phosphate and phosphoenolpyruvate: step 3/7. In terms of biological role, involved in the third step of the chorismate pathway, which leads to the biosynthesis of aromatic amino acids. Catalyzes the cis-dehydration of 3-dehydroquinate (DHQ) and introduces the first double bond of the aromatic ring to yield 3-dehydroshikimate. The chain is 3-dehydroquinate dehydratase from Geobacillus thermodenitrificans (strain NG80-2).